Here is a 437-residue protein sequence, read N- to C-terminus: GTP-binding protein ERG (437 aa).

The segment covering 39 to 50 (QPNLDEPTSINE) has biased composition (polar residues). The disordered stretch occupies residues 39-65 (QPNLDEPTSINEDGSSSDSVFDSSQYP). Low complexity predominate over residues 51–62 (DGSSSDSVFDSS). 2 positions are modified to phosphoserine: Ser-111 and Ser-112. Positions 152–333 (KSLNVGIIGP…LMDQAVKKPW (182 aa)) constitute an Era-type G domain. Positions 160-167 (GPPNAGKS) are G1. 160–167 (GPPNAGKS) contributes to the GTP binding site. The tract at residues 186 to 190 (NTTTH) is G2. A G3 region spans residues 207–210 (DTPG). GTP contacts are provided by residues 207-211 (DTPGL) and 279-282 (NKVD). The G4 stretch occupies residues 279–282 (NKVD). The segment at 309–311 (ISG) is G5. The KH type-2 domain occupies 361 to 437 (VHQEIPYGLE…VHLILQVKLK (77 aa)).

It belongs to the TRAFAC class TrmE-Era-EngA-EngB-Septin-like GTPase superfamily. Era GTPase family.

Its function is as follows. Has a crucial role in plant growth and development, possibly by influencing mitochondrial division. The sequence is that of GTP-binding protein ERG (ERG) from Arabidopsis thaliana (Mouse-ear cress).